The primary structure comprises 620 residues: Chaperone protein HscA homolog (620 aa).

Belongs to the heat shock protein 70 family.

In terms of biological role, chaperone involved in the maturation of iron-sulfur cluster-containing proteins. Has a low intrinsic ATPase activity which is markedly stimulated by HscB. This chain is Chaperone protein HscA homolog, found in Neisseria meningitidis serogroup B (strain ATCC BAA-335 / MC58).